Reading from the N-terminus, the 148-residue chain is SsrA-binding protein (148 aa).

A disordered region spans residues Glu129–Ala148.

Belongs to the SmpB family.

The protein resides in the cytoplasm. Required for rescue of stalled ribosomes mediated by trans-translation. Binds to transfer-messenger RNA (tmRNA), required for stable association of tmRNA with ribosomes. tmRNA and SmpB together mimic tRNA shape, replacing the anticodon stem-loop with SmpB. tmRNA is encoded by the ssrA gene; the 2 termini fold to resemble tRNA(Ala) and it encodes a 'tag peptide', a short internal open reading frame. During trans-translation Ala-aminoacylated tmRNA acts like a tRNA, entering the A-site of stalled ribosomes, displacing the stalled mRNA. The ribosome then switches to translate the ORF on the tmRNA; the nascent peptide is terminated with the 'tag peptide' encoded by the tmRNA and targeted for degradation. The ribosome is freed to recommence translation, which seems to be the essential function of trans-translation. This Ralstonia nicotianae (strain ATCC BAA-1114 / GMI1000) (Ralstonia solanacearum) protein is SsrA-binding protein.